We begin with the raw amino-acid sequence, 201 residues long: Dephospho-CoA kinase (201 aa).

The DPCK domain occupies 4-201 (AFFVTASIAC…VIQEISKGKM (198 aa)). 12–17 (ACGKST) contributes to the ATP binding site.

It belongs to the CoaE family.

The protein localises to the cytoplasm. The catalysed reaction is 3'-dephospho-CoA + ATP = ADP + CoA + H(+). The protein operates within cofactor biosynthesis; coenzyme A biosynthesis; CoA from (R)-pantothenate: step 5/5. Functionally, catalyzes the phosphorylation of the 3'-hydroxyl group of dephosphocoenzyme A to form coenzyme A. The sequence is that of Dephospho-CoA kinase from Campylobacter jejuni (strain RM1221).